Consider the following 512-residue polypeptide: Polyamine aminopropyltransferase (512 aa).

A run of 7 helical transmembrane segments spans residues 19–39 (IVSICGIIFEVLFGALGSYIL), 48–68 (LTISLFLTGMGIGASLSEKFM), 76–96 (VWIEFCVALIGGFSSFIMFGI), 108–128 (YLYSITLIIGALTGVELPILI), 151–171 (AGGLIGGVLFVFLFRPYFGMV), 172–192 (KTAFLVGLINLTVALIVLWLF), and 199–219 (FIVHAVIGGVIGVLLIAGLFF). The PABS domain occupies 215 to 450 (AGLFFGEEMA…GNWGFVMASR (236 aa)). Residues 217–457 (LFFGEEMAFN…ASREEIDLDI (241 aa)) form a spermidine synthase region. Q245 is a binding site for S-methyl-5'-thioadenosine. Residues H275 and D299 each coordinate spermidine. Residues D319 and 353 to 354 (DA) each bind S-methyl-5'-thioadenosine. D371 acts as the Proton acceptor in catalysis.

Belongs to the spermidine/spermine synthase family. In terms of assembly, homodimer or homotetramer.

The protein resides in the cell membrane. It catalyses the reaction S-adenosyl 3-(methylsulfanyl)propylamine + putrescine = S-methyl-5'-thioadenosine + spermidine + H(+). The protein operates within amine and polyamine biosynthesis; spermidine biosynthesis; spermidine from putrescine: step 1/1. In terms of biological role, catalyzes the irreversible transfer of a propylamine group from the amino donor S-adenosylmethioninamine (decarboxy-AdoMet) to putrescine (1,4-diaminobutane) to yield spermidine. The polypeptide is Polyamine aminopropyltransferase (Oceanobacillus iheyensis (strain DSM 14371 / CIP 107618 / JCM 11309 / KCTC 3954 / HTE831)).